A 323-amino-acid chain; its full sequence is tRNA dimethylallyltransferase (323 aa).

ATP is bound at residue 12-19; that stretch reads GPTAAGKT. A substrate-binding site is contributed by 14 to 19; the sequence is TAAGKT. Interaction with substrate tRNA regions lie at residues 37–40 and 161–165; these read DSAL and QRLMR.

It belongs to the IPP transferase family. As to quaternary structure, monomer. Mg(2+) is required as a cofactor.

The enzyme catalyses adenosine(37) in tRNA + dimethylallyl diphosphate = N(6)-dimethylallyladenosine(37) in tRNA + diphosphate. Its function is as follows. Catalyzes the transfer of a dimethylallyl group onto the adenine at position 37 in tRNAs that read codons beginning with uridine, leading to the formation of N6-(dimethylallyl)adenosine (i(6)A). This Pseudomonas aeruginosa (strain LESB58) protein is tRNA dimethylallyltransferase.